We begin with the raw amino-acid sequence, 869 residues long: Histone deacetylase 4 (869 aa).

Disordered stretches follow at residues Met1 to Ser25, Ser128 to Gln167, and Arg180 to Val218. Residues Glu184–Gly202 are compositionally biased toward polar residues. Phosphoserine is present on Ser251. Positions Cys460–Asp802 are histone deacetylase. The active site involves His608.

The protein belongs to the histone deacetylase family. HD type 2 subfamily. Interacts with mef-2. In terms of processing, phosphorylated by serine/threonine-protein kinase kin-29 at Ser-251; the phosphorylation inhibits repression of transcription by mef-2. May be phosphorylated by either cyclic-AMP dependent or cyclic-GMP dependent protein kinases. Expressed in body-wall muscle cells, hypodermal seam cells and neuronal cells including sensory amphid neuronal processes, the nerve ring, ventral nerve cords and motor neuronal commissures.

It localises to the nucleus. It carries out the reaction N(6)-acetyl-L-lysyl-[histone] + H2O = L-lysyl-[histone] + acetate. In terms of biological role, responsible for the deacetylation of lysine residues on the N-terminal part of the core histones (H2A, H2B, H3 and H4). Histone deacetylation gives a tag for epigenetic repression and plays an important role in transcriptional regulation, cell cycle progression and developmental events. Histone deacetylases act via the formation of large multiprotein complexes. Involved in transduction of sensory signals, together with egl-4, kin-29 and mef-2; binding to transcription factor mef-2 enables negative modulation of chemoreceptor gene expression in chemosensory neurons. May be involved in muscle development. The chain is Histone deacetylase 4 (hda-4) from Caenorhabditis elegans.